Consider the following 855-residue polypeptide: Envelope glycoprotein gp160 (855 aa).

The signal sequence occupies residues 1 to 31 (MKVKGTRRNYQHLWRWGTLLLGMLMICSATE). Topologically, residues 32-683 (KLWVTVYYGV…ITNWLWYIKI (652 aa)) are extracellular. Cysteine 53 and cysteine 73 are joined by a disulfide. N-linked (GlcNAc...) asparagine; by host glycosylation is found at asparagine 87, asparagine 129, asparagine 140, asparagine 154, asparagine 158, asparagine 184, asparagine 190, asparagine 200, asparagine 233, asparagine 244, asparagine 265, asparagine 279, asparagine 292, asparagine 298, asparagine 304, asparagine 334, asparagine 341, asparagine 358, and asparagine 364. 5 disulfide bridges follow: cysteine 118/cysteine 208, cysteine 125/cysteine 199, cysteine 130/cysteine 155, cysteine 221/cysteine 250, and cysteine 231/cysteine 242. A V1 region spans residues 130–154 (CTDLGKATNTNSSNWKEEIKGEIKN). The V2 stretch occupies residues 155-199 (CSFNITTSIRDKIQKENALFRNLDVVPIDNASTTTNYTNYRLIHC). The interval 299 to 332 (CTRPNNNTRKSIYIGPGRAFHTTGRIIGDIRKAH) is V3. Residues cysteine 299 and cysteine 333 are joined by a disulfide bond. Residues 366–376 (SSGGDPEIVMH) form a CD4-binding loop region. 2 disulfides stabilise this stretch: cysteine 380/cysteine 442 and cysteine 387/cysteine 415. A V4 region spans residues 387–415 (CNTTQLFNNTWRLNHTEGTKGNDTIILPC). 7 N-linked (GlcNAc...) asparagine; by host glycosylation sites follow: asparagine 388, asparagine 394, asparagine 400, asparagine 408, asparagine 445, asparagine 458, and asparagine 461. V5 regions lie at residues 458–469 (NVTNDTEVFRPG) and 460–469 (TNDTEVFRPG). The interval 510–531 (AVGIVGAMFLGFLGAAGSTMGA) is fusion peptide. Residues 573–591 (KQLQARVLAVERYLRDQQL) are immunosuppression. Cysteine 597 and cysteine 603 are joined by a disulfide. N-linked (GlcNAc...) asparagine; by host glycans are attached at residues asparagine 610, asparagine 615, asparagine 624, and asparagine 636. Residues 632–666 (REIDNYTNTIYTLLEESQNQQEKNEQELLELDKWA) adopt a coiled-coil conformation. The interval 661–682 (ELDKWASLWNWFSITNWLWYIK) is MPER; binding to GalCer. A helical transmembrane segment spans residues 684–704 (FIMIVGGLVGLRIVFAVLSIV). The Cytoplasmic segment spans residues 705-855 (NRVRQGYSPL…IRQGLERLLL (151 aa)). A YXXL motif; contains endocytosis signal motif is present at residues 711–714 (YSPL). Residues 720–739 (LPVPRGPDRPDGIEEEGGER) are disordered. A lipid anchor (S-palmitoyl cysteine; by host) is attached at cysteine 763. The short motif at 854 to 855 (LL) is the Di-leucine internalization motif element.

The protein belongs to the HIV-1 env protein family. In terms of assembly, the mature envelope protein (Env) consists of a homotrimer of non-covalently associated gp120-gp41 heterodimers. The resulting complex protrudes from the virus surface as a spike. There seems to be as few as 10 spikes on the average virion. Interacts with host CD4, CCR5 and CXCR4. Gp120 also interacts with the C-type lectins CD209/DC-SIGN and CLEC4M/DC-SIGNR (collectively referred to as DC-SIGN(R)). Gp120 and gp41 interact with GalCer. Gp120 interacts with host ITGA4/ITGB7 complex; on CD4+ T-cells, this interaction results in rapid activation of integrin ITGAL/LFA-1, which facilitates efficient cell-to-cell spreading of HIV-1. Gp120 interacts with cell-associated heparan sulfate; this interaction increases virus infectivity on permissive cells and may be involved in infection of CD4- cells. The mature envelope protein (Env) consists of a homotrimer of non-covalently associated gp120-gp41 heterodimers. The resulting complex protrudes from the virus surface as a spike. There seems to be as few as 10 spikes on the average virion. Post-translationally, highly glycosylated by host. The high number of glycan on the protein is reffered to as 'glycan shield' because it contributes to hide protein sequence from adaptive immune system. Palmitoylation of the transmembrane protein and of Env polyprotein (prior to its proteolytic cleavage) is essential for their association with host cell membrane lipid rafts. Palmitoylation is therefore required for envelope trafficking to classical lipid rafts, but not for viral replication. In terms of processing, specific enzymatic cleavages in vivo yield mature proteins. Envelope glycoproteins are synthesized as an inactive precursor that is heavily N-glycosylated and processed likely by host cell furin in the Golgi to yield the mature SU and TM proteins. The cleavage site between SU and TM requires the minimal sequence [KR]-X-[KR]-R. About 2 of the 9 disulfide bonds of gp41 are reduced by P4HB/PDI, following binding to CD4 receptor.

It localises to the virion membrane. Its subcellular location is the host cell membrane. It is found in the host endosome membrane. In terms of biological role, oligomerizes in the host endoplasmic reticulum into predominantly trimers. In a second time, gp160 transits in the host Golgi, where glycosylation is completed. The precursor is then proteolytically cleaved in the trans-Golgi and thereby activated by cellular furin or furin-like proteases to produce gp120 and gp41. Its function is as follows. Attaches the virus to the host lymphoid cell by binding to the primary receptor CD4. This interaction induces a structural rearrangement creating a high affinity binding site for a chemokine coreceptor like CXCR4 and/or CCR5. Acts as a ligand for CD209/DC-SIGN and CLEC4M/DC-SIGNR, which are respectively found on dendritic cells (DCs), and on endothelial cells of liver sinusoids and lymph node sinuses. These interactions allow capture of viral particles at mucosal surfaces by these cells and subsequent transmission to permissive cells. HIV subverts the migration properties of dendritic cells to gain access to CD4+ T-cells in lymph nodes. Virus transmission to permissive T-cells occurs either in trans (without DCs infection, through viral capture and transmission), or in cis (following DCs productive infection, through the usual CD4-gp120 interaction), thereby inducing a robust infection. In trans infection, bound virions remain infectious over days and it is proposed that they are not degraded, but protected in non-lysosomal acidic organelles within the DCs close to the cell membrane thus contributing to the viral infectious potential during DCs' migration from the periphery to the lymphoid tissues. On arrival at lymphoid tissues, intact virions recycle back to DCs' cell surface allowing virus transmission to CD4+ T-cells. Acts as a class I viral fusion protein. Under the current model, the protein has at least 3 conformational states: pre-fusion native state, pre-hairpin intermediate state, and post-fusion hairpin state. During fusion of viral and target intracellular membranes, the coiled coil regions (heptad repeats) assume a trimer-of-hairpins structure, positioning the fusion peptide in close proximity to the C-terminal region of the ectodomain. The formation of this structure appears to drive apposition and subsequent fusion of viral and target cell membranes. Complete fusion occurs in host cell endosomes and is dynamin-dependent, however some lipid transfer might occur at the plasma membrane. The virus undergoes clathrin-dependent internalization long before endosomal fusion, thus minimizing the surface exposure of conserved viral epitopes during fusion and reducing the efficacy of inhibitors targeting these epitopes. Membranes fusion leads to delivery of the nucleocapsid into the cytoplasm. In Homo sapiens (Human), this protein is Envelope glycoprotein gp160.